We begin with the raw amino-acid sequence, 292 residues long: UTP--glucose-1-phosphate uridylyltransferase (292 aa).

This sequence belongs to the UDPGP type 2 family. Interacts with FloT.

It localises to the cell membrane. The protein localises to the membrane raft. The enzyme catalyses alpha-D-glucose 1-phosphate + UTP + H(+) = UDP-alpha-D-glucose + diphosphate. It functions in the pathway glycolipid metabolism; diglucosyl-diacylglycerol biosynthesis. Catalyzes the formation of UDP-glucose from glucose-1-phosphate and UTP. This is an intermediate step in the biosynthesis of diglucosyl-diacylglycerol (Glc2-DAG), i.e. the predominant glycolipid found in B.subtilis membrane, which is also used as a membrane anchor for lipoteichoic acid (LTA). Has a role in the biosynthesis of all phosphate-containing envelope polymers, since UDP-glucose serves as a glucosyl donor not only for the biosynthesis of LTA but also for wall teichoic acids (WTAs). Is required for biofilm formation. This is likely due to another role of UDP-glucose, which might also act as a metabolic signal regulating biofilm formation or may be involved in some unknown biosynthetic pathway essential for biofilm formation, e.g. the synthesis of an exopolysaccharide. This is UTP--glucose-1-phosphate uridylyltransferase (gtaB) from Bacillus subtilis (strain 168).